Consider the following 433-residue polypeptide: Keratin, type I cytoskeletal 17 (433 aa).

A disordered region spans residues 1–24 (MTTTIRQFTSSSSIKGSSGLGGGS). Positions 1 to 83 (MTTTIRQFTS…GGVDGLLAGG (83 aa)) are head. Residues S12 and S13 each carry the phosphoserine modification. Residue K15 forms a Glycyl lysine isopeptide (Lys-Gly) (interchain with G-Cter in SUMO1); alternate linkage. K15 is covalently cross-linked (Glycyl lysine isopeptide (Lys-Gly) (interchain with G-Cter in SUMO2); alternate). 4 positions are modified to phosphoserine: S25, S32, S34, and S39. The residue at position 44 (S44) is a Phosphoserine; by RPS6KA1. Residues 84 to 120 (EKATMQNLNDRLASYLDKVRALEEANTELEVKIRDWY) form a coil 1A region. Residues 84 to 395 (EKATMQNLND…RLLEGEDAHL (312 aa)) enclose the IF rod domain. T110 is modified (phosphothreonine). The interval 121 to 138 (QKQAPGPARDYSAYYQTI) is linker 1. Residues 139 to 230 (EDLKNKILVA…NHEEEMNALR (92 aa)) are coil 1B. Residues 231 to 250 (GQVGGEINVEMDAAPGVDLS) are linker 12. The tract at residues 251–392 (RILSEMRDQY…TYRRLLEGED (142 aa)) is coil 2. K278 is covalently cross-linked (Glycyl lysine isopeptide (Lys-Gly) (interchain with G-Cter in SUMO2)). A Phosphothreonine modification is found at T279. Residue S323 is modified to Phosphoserine. Residues 393-433 (AHLTQYKPKEPVTTRQVRTIVEEVQDGKVISSREQVHQTTR) are tail. Residues K399, K401, and K420 each participate in a glycyl lysine isopeptide (Lys-Gly) (interchain with G-Cter in SUMO1); alternate cross-link. Glycyl lysine isopeptide (Lys-Gly) (interchain with G-Cter in SUMO2); alternate cross-links involve residues K399, K401, and K420.

It belongs to the intermediate filament family. Heterodimer of a type I and a type II keratin. KRT17 associates with KRT6 isomers (KRT6A or KRT6B). Interacts with TRADD and SFN. Post-translationally, phosphorylation at Ser-44 occurs in a growth- and stress-dependent fashion in skin keratinocytes, it has no effect on filament organization.

The protein resides in the cytoplasm. Its function is as follows. Type I keratin involved in the formation and maintenance of various skin appendages, specifically in determining shape and orientation of hair. Required for the correct growth of hair follicles, in particular for the persistence of the anagen (growth) state. Modulates the function of TNF-alpha in the specific context of hair cycling. Regulates protein synthesis and epithelial cell growth through binding to the adapter protein SFN and by stimulating Akt/mTOR pathway. Involved in tissue repair. May be a marker of basal cell differentiation in complex epithelia and therefore indicative of a certain type of epithelial 'stem cells'. Acts as a promoter of epithelial proliferation by acting a regulator of immune response in skin: promotes Th1/Th17-dominated immune environment contributing to the development of basaloid skin tumors. May act as an autoantigen in the immunopathogenesis of psoriasis, with certain peptide regions being a major target for autoreactive T-cells and hence causing their proliferation. The chain is Keratin, type I cytoskeletal 17 from Rattus norvegicus (Rat).